Consider the following 291-residue polypeptide: Probable xyloglucan endotransglucosylase/hydrolase protein 16 (291 aa).

An N-terminal signal peptide occupies residues Met-1–Ser-24. In terms of domain architecture, GH16 spans Gly-25–Tyr-215. Catalysis depends on Glu-101, which acts as the Nucleophile. The active-site Proton donor is the Glu-105. Glu-105 lines the xyloglucan pocket. Residue Asn-109 is glycosylated (N-linked (GlcNAc...) asparagine). Xyloglucan contacts are provided by residues His-118–Asn-120, Asn-128–Glu-130, Asp-194–Trp-195, and Gly-199. Cystine bridges form between Cys-223/Cys-232 and Cys-272/Cys-286. A xyloglucan-binding site is contributed by Arg-277.

This sequence belongs to the glycosyl hydrolase 16 family. XTH group 2 subfamily. Contains at least one intrachain disulfide bond essential for its enzymatic activity.

The protein localises to the secreted. It is found in the cell wall. The protein resides in the extracellular space. Its subcellular location is the apoplast. The enzyme catalyses breaks a beta-(1-&gt;4) bond in the backbone of a xyloglucan and transfers the xyloglucanyl segment on to O-4 of the non-reducing terminal glucose residue of an acceptor, which can be a xyloglucan or an oligosaccharide of xyloglucan.. Catalyzes xyloglucan endohydrolysis (XEH) and/or endotransglycosylation (XET). Cleaves and religates xyloglucan polymers, an essential constituent of the primary cell wall, and thereby participates in cell wall construction of growing tissues. The polypeptide is Probable xyloglucan endotransglucosylase/hydrolase protein 16 (XTH16) (Arabidopsis thaliana (Mouse-ear cress)).